We begin with the raw amino-acid sequence, 226 residues long: Protein Thf1 (226 aa).

Residues 183 to 213 (EEKMQKDLDLYRSNLEKMDQLLTVIEEALQA) are a coiled coil.

The protein belongs to the THF1 family.

Its function is as follows. May be involved in photosynthetic membrane biogenesis. This is Protein Thf1 from Gloeothece citriformis (strain PCC 7424) (Cyanothece sp. (strain PCC 7424)).